Reading from the N-terminus, the 88-residue chain is Small ribosomal subunit protein bS16 (88 aa).

The protein belongs to the bacterial ribosomal protein bS16 family.

The protein is Small ribosomal subunit protein bS16 of Desulfitobacterium hafniense (strain DSM 10664 / DCB-2).